We begin with the raw amino-acid sequence, 387 residues long: Na(+)/H(+)-K(+) antiporter GerN (387 aa).

11 consecutive transmembrane segments (helical) span residues 29-49 (PSVL…LGWI), 54-74 (LLTQ…GLET), 87-107 (LAVA…SGLV), 114-134 (NAVF…VQTL), 149-169 (LGAA…AMSF), 175-195 (VNLT…ILIG), 219-239 (ALII…AGII), 263-283 (PIAY…NITF), 290-310 (IWFI…GCGF), 324-344 (IIGA…GTGL), and 347-367 (GLLA…TTMI).

It belongs to the monovalent cation:proton antiporter 2 (CPA2) transporter (TC 2.A.37) family.

It localises to the membrane. Na(+)/H(+) antiporter that extrudes sodium in exchange for external protons. Can also use potassium as a coupling ion, without completely replacing H(+). This Na(+)/H(+)-K(+) antiport is much more rapid than Na(+)/H(+) antiport. Can also extrude lithium. Important for the inosine-dependent germination of spores. The sequence is that of Na(+)/H(+)-K(+) antiporter GerN (gerN) from Bacillus cereus.